Consider the following 305-residue polypeptide: UDP-3-O-acyl-N-acetylglucosamine deacetylase (305 aa).

Zn(2+) contacts are provided by H79, H238, and D242. H265 serves as the catalytic Proton donor.

The protein belongs to the LpxC family. Zn(2+) serves as cofactor.

It catalyses the reaction a UDP-3-O-[(3R)-3-hydroxyacyl]-N-acetyl-alpha-D-glucosamine + H2O = a UDP-3-O-[(3R)-3-hydroxyacyl]-alpha-D-glucosamine + acetate. It participates in glycolipid biosynthesis; lipid IV(A) biosynthesis; lipid IV(A) from (3R)-3-hydroxytetradecanoyl-[acyl-carrier-protein] and UDP-N-acetyl-alpha-D-glucosamine: step 2/6. Functionally, catalyzes the hydrolysis of UDP-3-O-myristoyl-N-acetylglucosamine to form UDP-3-O-myristoylglucosamine and acetate, the committed step in lipid A biosynthesis. This is UDP-3-O-acyl-N-acetylglucosamine deacetylase from Haemophilus influenzae (strain 86-028NP).